We begin with the raw amino-acid sequence, 427 residues long: Glutamate-1-semialdehyde 2,1-aminomutase (427 aa).

Lysine 265 bears the N6-(pyridoxal phosphate)lysine mark.

Belongs to the class-III pyridoxal-phosphate-dependent aminotransferase family. HemL subfamily. Homodimer. It depends on pyridoxal 5'-phosphate as a cofactor.

It localises to the cytoplasm. It catalyses the reaction (S)-4-amino-5-oxopentanoate = 5-aminolevulinate. It functions in the pathway porphyrin-containing compound metabolism; protoporphyrin-IX biosynthesis; 5-aminolevulinate from L-glutamyl-tRNA(Glu): step 2/2. The sequence is that of Glutamate-1-semialdehyde 2,1-aminomutase from Pseudomonas syringae pv. syringae (strain B728a).